A 436-amino-acid chain; its full sequence is Protein disulfide-isomerase (436 aa).

The region spanning 216-365 (FLAGKIDPSI…VEDATESAKA (150 aa)) is the Thioredoxin domain. Catalysis depends on nucleophile residues cysteine 266 and cysteine 269. Residues cysteine 266 and cysteine 269 are joined by a disulfide bond. The segment at 328-436 (TLVPHCRGSR…ASASSVKDEL (109 aa)) is disordered. Over residues 334–343 (RGSRPVHRRE) the composition is skewed to basic residues. Low complexity-rich tracts occupy residues 362 to 377 (SAKASASSATDSAASA) and 385 to 436 (VKSG…KDEL). The Prevents secretion from ER motif lies at 433 to 436 (KDEL).

This sequence belongs to the protein disulfide isomerase family.

Its subcellular location is the endoplasmic reticulum lumen. It carries out the reaction Catalyzes the rearrangement of -S-S- bonds in proteins.. In terms of biological role, participates in the folding of proteins containing disulfide bonds, may be involved in glycosylation, prolyl hydroxylation and triglyceride transfer. This Alternaria alternata (Alternaria rot fungus) protein is Protein disulfide-isomerase.